The following is a 186-amino-acid chain: MKMIVGLGNIGTRYDETRHNTGFMVVDQLARDYHLGAFTHLKQEAVAVSGVINGEKVMLVKPTTFMNDSGRAVGPLVDYYDIDLDDLVIVNDDLDMPVGKVRLKTHGASGGHNGLKSIISVLGTKNFNRVKVGIDHPQHGTVVSHVLGKFSKEERPKFDQAVEQAEHALEDWINGEDFAKLMNAYN.

Residue Tyr-14 coordinates tRNA. His-19 serves as the catalytic Proton acceptor. 3 residues coordinate tRNA: Phe-65, Asn-67, and Asn-113.

This sequence belongs to the PTH family. Monomer.

It is found in the cytoplasm. It catalyses the reaction an N-acyl-L-alpha-aminoacyl-tRNA + H2O = an N-acyl-L-amino acid + a tRNA + H(+). Functionally, hydrolyzes ribosome-free peptidyl-tRNAs (with 1 or more amino acids incorporated), which drop off the ribosome during protein synthesis, or as a result of ribosome stalling. Catalyzes the release of premature peptidyl moieties from peptidyl-tRNA molecules trapped in stalled 50S ribosomal subunits, and thus maintains levels of free tRNAs and 50S ribosomes. This Limosilactobacillus reuteri (strain DSM 20016) (Lactobacillus reuteri) protein is Peptidyl-tRNA hydrolase.